Here is a 311-residue protein sequence, read N- to C-terminus: ATP synthase subunit a (311 aa).

Transmembrane regions (helical) follow at residues 62–82 (AVHV…GFFM), 123–143 (VAPM…MDLI), 179–199 (VTVF…WGFI), 213–233 (FWYF…VALI), 253–273 (IFIL…LGGI), and 276–296 (FGWA…FMVL).

Belongs to the ATPase A chain family. F-type ATPases have 2 components, CF(1) - the catalytic core - and CF(0) - the membrane proton channel. CF(1) has five subunits: alpha(3), beta(3), gamma(1), delta(1), epsilon(1). CF(0) has three main subunits: a(1), b(2) and c(9-12). The alpha and beta chains form an alternating ring which encloses part of the gamma chain. CF(1) is attached to CF(0) by a central stalk formed by the gamma and epsilon chains, while a peripheral stalk is formed by the delta and b chains.

The protein localises to the cell inner membrane. Its function is as follows. Key component of the proton channel; it plays a direct role in the translocation of protons across the membrane. In Teredinibacter turnerae (strain ATCC 39867 / T7901), this protein is ATP synthase subunit a.